Here is a 128-residue protein sequence, read N- to C-terminus: Platelet basic protein (128 aa).

Residues 1 to 34 (MSLRLDTTPSCNSARPLHALQVLLLLSLLLTALA) form the signal peptide. Disulfide bonds link cysteine 63–cysteine 89 and cysteine 65–cysteine 105.

Belongs to the intercrine alpha (chemokine CxC) family. In terms of assembly, beta-thromboglobulin is a homotetramer. In terms of processing, proteolytic removal of residues 1-9 produces the active peptide connective tissue-activating peptide III (CTAP-III) (low-affinity platelet factor IV (LA-PF4)). Proteolytic removal of residues 1-13 produces the active peptide beta-thromboglobulin, which is released from platelets along with platelet factor 4 and platelet-derived growth factor. Post-translationally, NAP-2(1-66) is produced by proteolytical processing, probably after secretion by leukocytes other than neutrophils. In terms of processing, NAP-2(73) and NAP-2(74) seem not be produced by proteolytical processing of secreted precursors but are released in an active form from platelets.

Its subcellular location is the secreted. Its function is as follows. LA-PF4 stimulates DNA synthesis, mitosis, glycolysis, intracellular cAMP accumulation, prostaglandin E2 secretion, and synthesis of hyaluronic acid and sulfated glycosaminoglycan. It also stimulates the formation and secretion of plasminogen activator by human synovial cells. NAP-2 is a ligand for CXCR1 and CXCR2, and NAP-2, NAP-2(73), NAP-2(74), NAP-2(1-66), and most potent NAP-2(1-63) are chemoattractants and activators for neutrophils. TC-1 and TC-2 are antibacterial proteins, in vitro released from activated platelet alpha-granules. CTAP-III(1-81) is more potent than CTAP-III desensitize chemokine-induced neutrophil activation. This Homo sapiens (Human) protein is Platelet basic protein (PPBP).